The chain runs to 951 residues: Serine/threonine-protein phosphatase 4 regulatory subunit 1 (951 aa).

HEAT repeat units lie at residues 26–63 (ESDV…VFNR), 82–119 (RDCI…FCQE), 127–164 (AFSK…QELI), 168–206 (DVET…MVGK), 208–246 (ITER…VVGQ), 248–285 (ATEE…ATCQ), and 287–324 (IRRT…TFAN). Disordered stretches follow at residues 326-395 (SSSG…DMRV), 407-501 (SESP…MATR), 539-569 (HDEA…SISE), and 592-612 (GGAD…ERRP). 3 stretches are compositionally biased toward basic and acidic residues: residues 332–360 (FKDE…RPED), 464–483 (DLDK…ERTG), and 539–551 (HDEA…RSEL). The HEAT 8 repeat unit spans residues 502-539 (KELEEMIENLEPHMDDPDVKAQVEVLSAALRASTLDAH). Over residues 594 to 604 (ADVGPGGGGGF) the composition is skewed to gly residues. HEAT repeat units follow at residues 699–735 (LTAA…LLHI), 777–815 (RDVY…KLHM), 820–858 (TFGV…DDCL), and 862–899 (QFAV…EKEY). The residue at position 936 (serine 936) is a Phosphoserine.

As to quaternary structure, serine/threonine-protein phosphatase 4 (PP4) occurs in different assemblies of the catalytic and one or more regulatory subunits. Component of the PP4 complex PPP4C-PPP4R1. Interacts with HDAC3.

Functionally, regulatory subunit of serine/threonine-protein phosphatase 4. May play a role in regulation of cell division in renal glomeruli. The PPP4C-PPP4R1 PP4 complex may play a role in dephosphorylation and regulation of HDAC3. Plays a role in the inhibition of TNF-induced NF-kappa-B activation by regulating the dephosphorylation of TRAF2. The protein is Serine/threonine-protein phosphatase 4 regulatory subunit 1 (Ppp4r1) of Rattus norvegicus (Rat).